The sequence spans 167 residues: Heme-degrading monooxygenase (167 aa).

The tract at residues methionine 1–glycine 50 is important for catalysis. The ABM domain occupies valine 67–glutamate 154.

The protein belongs to the antibiotic biosynthesis monooxygenase family. Monomer.

The protein localises to the cytoplasm. Its function is as follows. Catalyzes the degradation of heme to biliverdin in the presence of a suitable electron donor such as ascorbate, with the subsequent release of iron. Hardly any CO is released by the heme degradation reaction. Binds heme. Allows bacterial pathogens to use the host heme as an iron source. Release of iron from heme may play a crucial role in the pathogenicity of L.monocytogenes. This chain is Heme-degrading monooxygenase, found in Listeria monocytogenes serovar 1/2a (strain ATCC BAA-679 / EGD-e).